A 44-amino-acid chain; its full sequence is Photosystem I reaction center subunit IX (44 aa).

A helical membrane pass occupies residues 7–27 (YLSVAPVLSTLSLGFFAGFLI).

It belongs to the PsaJ family.

It localises to the plastid membrane. Its function is as follows. May help in the organization of the PsaE and PsaF subunits. The sequence is that of Photosystem I reaction center subunit IX from Cuscuta obtusiflora (Peruvian dodder).